The chain runs to 174 residues: Peptide deformylase (174 aa).

Residues cysteine 94 and histidine 136 each contribute to the Fe cation site. The active site involves glutamate 137. Position 140 (histidine 140) interacts with Fe cation.

The protein belongs to the polypeptide deformylase family. Fe(2+) serves as cofactor.

It catalyses the reaction N-terminal N-formyl-L-methionyl-[peptide] + H2O = N-terminal L-methionyl-[peptide] + formate. Its function is as follows. Removes the formyl group from the N-terminal Met of newly synthesized proteins. Requires at least a dipeptide for an efficient rate of reaction. N-terminal L-methionine is a prerequisite for activity but the enzyme has broad specificity at other positions. This chain is Peptide deformylase, found in Rhizobium meliloti (strain 1021) (Ensifer meliloti).